The primary structure comprises 474 residues: uncharacterized protein (474 aa).

This is an uncharacterized protein from Magallana gigas (Pacific oyster).